Here is a 370-residue protein sequence, read N- to C-terminus: Alpha-ketoglutarate-dependent dioxygenase cnsP (370 aa).

The span at 1 to 12 (MSTTTVITPGTI) shows a compositional bias: low complexity. The segment at 1–20 (MSTTTVITPGTITREKNENG) is disordered. Position 131 (histidine 131) interacts with substrate. Fe cation-binding residues include histidine 169 and aspartate 171. Residue threonine 197 participates in 2-oxoglutarate binding. Histidine 321 lines the Fe cation pocket. 2-oxoglutarate contacts are provided by arginine 333 and arginine 337. Substrate is bound at residue arginine 337.

The protein belongs to the TfdA dioxygenase family. Fe(2+) serves as cofactor.

The protein operates within alkaloid biosynthesis. Functionally, alpha-ketoglutarate-dependent dioxygenase; part of the gene cluster that mediates the biosynthesis of communesins, a prominent class of indole alkaloids with great potential as pharmaceuticals. Communesins are biosynthesized by the coupling of tryptamine and aurantioclavine, two building blocks derived from L-tryptophan. The L-tryptophan decarboxylase cnsB converts L-tryptophan to tryptamine, whereas the tryptophan dimethylallyltransferase cnsF converts L-tryptophan to 4-dimethylallyl tryptophan which is further transformed to aurantioclavine by the aurantioclavine synthase cnsA, probably aided by the catalase cnsD. The cytochrome P450 monooxygenase cnsC catalyzes the heterodimeric coupling between the two different indole moieties, tryptamine and aurantioclavine, to construct vicinal quaternary stereocenters and yield the heptacyclic communesin scaffold. The O-methyltransferase cnsE then methylates the communesin scaffold to produce communesin K, the simplest characterized communesin that contains the heptacyclic core. The dioxygenase cnsJ converts communesin K into communesin I. Acylation to introduce the hexadienyl group at position N16 of communesin I by the acyltransferase cnsK leads to the production of communesin B. The hexadienyl group is produced by the highly reducing polyketide synthase cnsI, before being hydrolytically removed from cnsI by the serine hydrolase cnsH, converted into hexadienyl-CoA by the CoA ligase cnsG, and then transferred to communesin I by cnsK. Surprisingly, cnsK may also be a promiscuous acyltransferase that can tolerate a range of acyl groups, including acetyl-, propionyl-, and butyryl-CoA, which lead to communesins A, G and H respectively. The roles of the alpha-ketoglutarate-dependent dioxygenases cnsM and cnsP have still to be determined. This Penicillium expansum (Blue mold rot fungus) protein is Alpha-ketoglutarate-dependent dioxygenase cnsP.